A 349-amino-acid chain; its full sequence is DNA replication and repair protein RecF (349 aa).

30–37 is an ATP binding site; the sequence is GKNGSGKT.

The protein belongs to the RecF family.

It localises to the cytoplasm. In terms of biological role, the RecF protein is involved in DNA metabolism; it is required for DNA replication and normal SOS inducibility. RecF binds preferentially to single-stranded, linear DNA. It also seems to bind ATP. The protein is DNA replication and repair protein RecF of Francisella tularensis subsp. holarctica (strain FTNF002-00 / FTA).